The chain runs to 305 residues: Ornithine carbamoyltransferase (305 aa).

Carbamoyl phosphate is bound by residues 52–55 (STRT), Gln79, Arg103, and 130–133 (HPLQ). Residues Asn162, Asp224, and 228 to 229 (SM) each bind L-ornithine. Carbamoyl phosphate-binding positions include 264–265 (CL) and Arg292.

It belongs to the aspartate/ornithine carbamoyltransferase superfamily. OTCase family.

The protein resides in the cytoplasm. The enzyme catalyses carbamoyl phosphate + L-ornithine = L-citrulline + phosphate + H(+). It functions in the pathway amino-acid biosynthesis; L-arginine biosynthesis; L-arginine from L-ornithine and carbamoyl phosphate: step 1/3. Its function is as follows. Reversibly catalyzes the transfer of the carbamoyl group from carbamoyl phosphate (CP) to the N(epsilon) atom of ornithine (ORN) to produce L-citrulline. The chain is Ornithine carbamoyltransferase from Pyrobaculum islandicum (strain DSM 4184 / JCM 9189 / GEO3).